Consider the following 220-residue polypeptide: MGIVRSRLHKRKITGGKTKIHRKRMKAELGRLPANTRLGARRVSPVRARGGNFKIRALRLDTGNFAWASEAIAHRVRLLDVVYNATSNELVRTKTLVKNCIVAVDAAPFKRWYAKHYGIDLDADKKSTKAAVAAEKKGRKSAHAAADKYDVNKASPKLQREWTRRRRNHRVEKAIADQLREGRVLARITSRPGQSGRADGILLEGAELQFYLKRLEKKKK.

It belongs to the eukaryotic ribosomal protein eS8 family.

In Leishmania major, this protein is Small ribosomal subunit protein eS8 (RPS8A).